A 490-amino-acid polypeptide reads, in one-letter code: UDP-glycosyltransferase 84A1 (490 aa).

The active-site Proton acceptor is His30. His30 is a binding site for an anthocyanidin. Positions 358, 373, 376, 377, 378, and 381 each coordinate UDP-alpha-D-glucose. Gly396 is an an anthocyanidin binding site. The UDP-alpha-D-glucose site is built by Asp397 and Gln398.

It belongs to the UDP-glycosyltransferase family. As to expression, expressed in roots, flowers and siliques.

The enzyme catalyses (E)-4-coumarate + UDP-alpha-D-glucose = 4-O-(beta-D-glucosyl)-trans-4-coumarate + UDP + H(+). It carries out the reaction (E)-ferulate + UDP-alpha-D-glucose = 1-O-[(E)-feruloyl]-beta-D-glucose + UDP. The catalysed reaction is (E)-caffeate + UDP-alpha-D-glucose = 1-O-[(E)-caffeoyl]-beta-D-glucose + UDP. It catalyses the reaction (E)-sinapate + UDP-alpha-D-glucose = 1-O-(trans-sinapoyl)-beta-D-glucose + UDP. The enzyme catalyses (E)-cinnamate + UDP-alpha-D-glucose = 1-O-(trans-cinnamoyl)-beta-D-glucose + UDP. Its function is as follows. UDP-glucosyltransferase that forms glucose esters with phenylpropanoids. Glucosylates 4-coumarate, ferulate, caffeate, sinapate and cinnamate. Can glucosylate the phytotoxic xenobiotic compound 2,4,5-trichlorophenol (TCP). The polypeptide is UDP-glycosyltransferase 84A1 (Arabidopsis thaliana (Mouse-ear cress)).